The primary structure comprises 237 residues: MSKNSKAYKAALEKIDAGRIYAPIDAMKTVKETAYSSYDPTVDVAIRLGVDPRKADQLVRGTVSLPNGTGKEVRVVVFAEGPNATAAEEAGADVVGTAELVERIQGGWTDFDAAIATPDQMAKVGRVARVLGPRGLMPNPKTGTVTTDVTKAVKEIKGGKISFRVDKAANLHAVLGKASFSAEQLAENYGALIDELLRVKPSAAKGRYLKKVTVSCTNGPAVPVDNTVVKNYTGEAE.

Belongs to the universal ribosomal protein uL1 family. Part of the 50S ribosomal subunit.

Its function is as follows. Binds directly to 23S rRNA. The L1 stalk is quite mobile in the ribosome, and is involved in E site tRNA release. In terms of biological role, protein L1 is also a translational repressor protein, it controls the translation of the L11 operon by binding to its mRNA. This chain is Large ribosomal subunit protein uL1, found in Corynebacterium kroppenstedtii (strain DSM 44385 / JCM 11950 / CIP 105744 / CCUG 35717).